We begin with the raw amino-acid sequence, 903 residues long: Translation initiation factor IF-2 (903 aa).

The segment at 49-314 (LNREHGSGPD…GSSLQQGFNK (266 aa)) is disordered. Residues 68 to 82 (STLNIQGTGGKSKSV) are compositionally biased toward polar residues. 2 stretches are compositionally biased toward basic and acidic residues: residues 93–163 (VKRD…EAAE) and 174–225 (EVSK…ENAT). Over residues 265 to 279 (GRARPAKVARQKKSN) the composition is skewed to basic residues. Positions 280 to 293 (KHSESKADREEARA) are enriched in basic and acidic residues. The tr-type G domain occupies 402–571 (PRAPVVTIMG…LLQSEVLELK (170 aa)). The G1 stretch occupies residues 411–418 (GHVDHGKT). Residue 411–418 (GHVDHGKT) coordinates GTP. Residues 436–440 (GITQH) form a G2 region. The segment at 457–460 (DTPG) is G3. GTP contacts are provided by residues 457–461 (DTPGH) and 511–514 (NKID). Positions 511–514 (NKID) are G4. A G5 region spans residues 547 to 549 (SAK).

The protein belongs to the TRAFAC class translation factor GTPase superfamily. Classic translation factor GTPase family. IF-2 subfamily.

It localises to the cytoplasm. One of the essential components for the initiation of protein synthesis. Protects formylmethionyl-tRNA from spontaneous hydrolysis and promotes its binding to the 30S ribosomal subunits. Also involved in the hydrolysis of GTP during the formation of the 70S ribosomal complex. This Cronobacter sakazakii (strain ATCC BAA-894) (Enterobacter sakazakii) protein is Translation initiation factor IF-2.